A 128-amino-acid polypeptide reads, in one-letter code: 3-aminoacrylate deaminase RutC (128 aa).

Belongs to the RutC family. In terms of assembly, homotrimer.

The enzyme catalyses (Z)-3-aminoacrylate + H2O + H(+) = 3-oxopropanoate + NH4(+). Its function is as follows. Involved in pyrimidine catabolism. Catalyzes the deamination of 3-aminoacrylate to malonic semialdehyde, a reaction that can also occur spontaneously. RutC may facilitate the reaction and modulate the metabolic fitness, rather than catalyzing essential functions. The protein is 3-aminoacrylate deaminase RutC of Escherichia coli O111:H- (strain 11128 / EHEC).